We begin with the raw amino-acid sequence, 181 residues long: CD160 antigen (181 aa).

A signal peptide spans 1-24 (MLLEPGRGCCALAILLAIVDIQSG). The Ig-like V-type domain occupies 25–133 (GCINITSSAS…QGHFFSILFT (109 aa)). Asparagine 28 is a glycosylation site (N-linked (GlcNAc...) asparagine). 2 disulfide bridges follow: cysteine 44–cysteine 112 and cysteine 61–cysteine 68. Residue asparagine 137 is glycosylated (N-linked (GlcNAc...) asparagine). Serine 159 carries the GPI-anchor amidated serine lipid modification. The propeptide at 160–181 (SGFLQEKVWVMLVTSLVALQAL) is removed in mature form.

Homomultimer; disulfide-linked. Interacts with HLA-G. Interacts with HLA-A2-B2M in complex with an HIV-derived peptide. Interacts with TNFRSF14 (via cysteine-rich domain 1); this interaction is direct. Interacts with LCK and CD247/CD3 zeta chain. As to expression, expression is restricted to functional NK and cytotoxic T lymphocytes. Expressed in viral-specific effector memory and terminally differentiated effector memory CD8+ T cells. Expressed in memory and activated CD4+ T cell subsets (at protein level). Expressed at high levels in intraepithelial lymphocytes (at protein level). Expressed in both alpha-beta and gamma-delta CD8+ T cell subsets (at protein level). Expressed in umbilical vein endothelial cells (at protein level). Expressed in monocytes and at lower levels in B cells. Isoform 3: Expressed exclusively in activated NK cells (at protein level).

It localises to the cell membrane. Its subcellular location is the secreted. Functionally, receptor on immune cells capable to deliver stimulatory or inhibitory signals that regulate cell activation and differentiation. Exists as a GPI-anchored and as a transmembrane form, each likely initiating distinct signaling pathways via phosphoinositol 3-kinase in activated NK cells and via LCK and CD247/CD3 zeta chain in activated T cells. Receptor for both classical and non-classical MHC class I molecules. In the context of acute viral infection, recognizes HLA-C and triggers NK cell cytotoxic activity, likely playing a role in anti-viral innate immune response. On CD8+ T cells, binds HLA-A2-B2M in complex with a viral peptide and provides a costimulatory signal to activated/memory T cells. Upon persistent antigen stimulation, such as occurs during chronic viral infection, may progressively inhibit TCR signaling in memory CD8+ T cells, contributing to T cell exhaustion. On endothelial cells, recognizes HLA-G and controls angiogenesis in immune privileged sites. Receptor or ligand for TNF superfamily member TNFRSF14, participating in bidirectional cell-cell contact signaling between antigen presenting cells and lymphocytes. Upon ligation of TNFRSF14, provides stimulatory signal to NK cells enhancing IFNG production and anti-tumor immune response. On activated CD4+ T cells, interacts with TNFRSF14 and down-regulates CD28 costimulatory signaling, restricting memory and alloantigen-specific immune response. In the context of bacterial infection, acts as a ligand for TNFRSF14 on epithelial cells, triggering the production of antimicrobial proteins and pro-inflammatory cytokines. Its function is as follows. The soluble GPI-cleaved form, usually released by activated lymphocytes, might play an immune regulatory role by limiting lymphocyte effector functions. In Homo sapiens (Human), this protein is CD160 antigen.